We begin with the raw amino-acid sequence, 443 residues long: MVRIGSSLLLATLAATTVSAASDPPKCSQDSHCPEEWPCCSLYGQCGTGAYCLGGCDPLMSFSLDSCTPEPICQGKTYKDWSNLDNLASNTKYLGDASKSDWVYSGYPKVEDGNLLLTMPKNSVGTLIANNHYIWYGKITAKIKSSRGAGVVTGFILLSDTKDEIDYEFVGADLTNVQTNYYFQGVLDYNHGGNASVSGGNTFGDWHEYTIDWKPDAITWSVDGEVKRTLKKESTYNETSKQYMYPQTPSRMQLSLWPAGQASNAPGTIAWAGGEIDWDSEDIKDPGYYYATFGEITVECYDPPSGADIKGTKAYIFKDKAGLESSVQITNNKTVLASFGATGLDMDVGASSSASGSANKTSSSANTVPSGNGGSGNEPGNSHSGSSGSGTSTSDGSGSSTGFSQGSETSASSNKNAAPSQNERVLNGSFFAVLVAVVALVTL.

The signal sequence occupies residues 1-20 (MVRIGSSLLLATLAATTVSA). The GH16 domain maps to 21-306 (ASDPPKCSQD…TVECYDPPSG (286 aa)). Cysteines 56 and 67 form a disulfide. The Nucleophile role is filled by E164. Catalysis depends on E168, which acts as the Proton donor. E168 contributes to the chitin binding site. N-linked (GlcNAc...) asparagine glycosylation is found at N194 and N237. 2 residues coordinate chitin: W257 and T268. 2 N-linked (GlcNAc...) asparagine glycosylation sites follow: N332 and N359. Low complexity-rich tracts occupy residues 350 to 367 (ASSS…SANT) and 378 to 410 (EPGN…SETS). Residues 350–420 (ASSSASGSAN…ASSNKNAAPS (71 aa)) are disordered. Polar residues predominate over residues 411-420 (ASSNKNAAPS). N416 carries the GPI-like-anchor amidated asparagine lipid modification. The propeptide at 417–443 (AAPSQNERVLNGSFFAVLVAVVALVTL) is removed in mature form. N427 carries N-linked (GlcNAc...) asparagine glycosylation.

This sequence belongs to the glycosyl hydrolase 16 family. CRH1 subfamily. Post-translationally, the GPI-like anchor contains a phosphoceramide lipid group. The anchor position has not been determined.

It is found in the cell membrane. It localises to the secreted. The protein localises to the cell wall. The enzyme catalyses Random endo-hydrolysis of N-acetyl-beta-D-glucosaminide (1-&gt;4)-beta-linkages in chitin and chitodextrins.. Dual chitinase/transglycosylase that plays a role in cell wall architecture. Chitinase and transglycosylase activities are coupled. Required for the polysaccharide cross-linking at the septa and the cell wall. More specifically, transfers chitin to 1,6-beta-glucan in the cell wall. In Aspergillus fumigatus (strain ATCC MYA-4609 / CBS 101355 / FGSC A1100 / Af293) (Neosartorya fumigata), this protein is Crh-like protein 2.